The sequence spans 29 residues: Cyclotide psyleio A (29 aa).

The segment at residues 1–29 (GLPICGETCFTGTCNTPGCSCTYPICTRD) is a cross-link (cyclopeptide (Gly-Asp)). Intrachain disulfides connect Cys-5-Cys-19, Cys-9-Cys-21, and Cys-14-Cys-26.

This is a cyclic peptide.

Probably participates in a plant defense mechanism. The chain is Cyclotide psyleio A from Psychotria brachyceras.